The following is a 95-amino-acid chain: Large ribosomal subunit protein bL25 (95 aa).

The protein belongs to the bacterial ribosomal protein bL25 family. Part of the 50S ribosomal subunit; part of the 5S rRNA/L5/L18/L25 subcomplex. Contacts the 5S rRNA. Binds to the 5S rRNA independently of L5 and L18.

Functionally, this is one of the proteins that binds to the 5S RNA in the ribosome where it forms part of the central protuberance. This is Large ribosomal subunit protein bL25 from Actinobacillus succinogenes (strain ATCC 55618 / DSM 22257 / CCUG 43843 / 130Z).